Reading from the N-terminus, the 352-residue chain is Protein RecA (352 aa).

67–74 contributes to the ATP binding site; sequence GPESSGKT. The tract at residues 333 to 352 is disordered; it reads DSTPDFAVDGNDAEETEQDF. Positions 343–352 are enriched in acidic residues; the sequence is NDAEETEQDF.

This sequence belongs to the RecA family.

The protein resides in the cytoplasm. In terms of biological role, can catalyze the hydrolysis of ATP in the presence of single-stranded DNA, the ATP-dependent uptake of single-stranded DNA by duplex DNA, and the ATP-dependent hybridization of homologous single-stranded DNAs. It interacts with LexA causing its activation and leading to its autocatalytic cleavage. The protein is Protein RecA of Klebsiella pneumoniae (strain 342).